The chain runs to 306 residues: Aspartate carbamoyltransferase catalytic subunit (306 aa).

The carbamoyl phosphate site is built by R49 and T50. An L-aspartate-binding site is contributed by K77. Residues R99, H127, and Q130 each coordinate carbamoyl phosphate. The L-aspartate site is built by R160 and R211. Carbamoyl phosphate contacts are provided by A250 and P251.

This sequence belongs to the aspartate/ornithine carbamoyltransferase superfamily. ATCase family. In terms of assembly, heterododecamer (2C3:3R2) of six catalytic PyrB chains organized as two trimers (C3), and six regulatory PyrI chains organized as three dimers (R2).

The enzyme catalyses carbamoyl phosphate + L-aspartate = N-carbamoyl-L-aspartate + phosphate + H(+). It functions in the pathway pyrimidine metabolism; UMP biosynthesis via de novo pathway; (S)-dihydroorotate from bicarbonate: step 2/3. Catalyzes the condensation of carbamoyl phosphate and aspartate to form carbamoyl aspartate and inorganic phosphate, the committed step in the de novo pyrimidine nucleotide biosynthesis pathway. The polypeptide is Aspartate carbamoyltransferase catalytic subunit (Bacillus licheniformis (strain ATCC 14580 / DSM 13 / JCM 2505 / CCUG 7422 / NBRC 12200 / NCIMB 9375 / NCTC 10341 / NRRL NRS-1264 / Gibson 46)).